Reading from the N-terminus, the 195-residue chain is N-terminal acetyltransferase B complex catalytic subunit NAT3 (195 aa).

Residues 2–172 (TTIQPFEPVD…DAFDMRKAMA (171 aa)) form the N-acetyltransferase domain.

The protein belongs to the acetyltransferase family. GNAT subfamily. As to quaternary structure, component of the N-terminal acetyltransferase B (NatB) complex, which is composed of NAT3 and MDM20.

It localises to the cytoplasm. It carries out the reaction N-terminal L-methionyl-L-asparaginyl-[protein] + acetyl-CoA = N-terminal N(alpha)-acetyl-L-methionyl-L-asparaginyl-[protein] + CoA + H(+). The enzyme catalyses N-terminal L-methionyl-L-glutaminyl-[protein] + acetyl-CoA = N-terminal N(alpha)-acetyl-L-methionyl-L-glutaminyl-[protein] + CoA + H(+). It catalyses the reaction N-terminal L-methionyl-L-aspartyl-[protein] + acetyl-CoA = N-terminal N(alpha)-acetyl-L-methionyl-L-aspartyl-[protein] + CoA + H(+). The catalysed reaction is N-terminal L-methionyl-L-glutamyl-[protein] + acetyl-CoA = N-terminal N(alpha)-acetyl-L-methionyl-L-glutamyl-[protein] + CoA + H(+). Functionally, catalytic subunit of the NatB N-terminal acetyltransferase, which catalyzes acetylation of the amino-terminal methionine residues of all proteins beginning with Met-Asp or Met-Glu and of some proteins beginning with Met-Asn, Met-Gln or Met-Met. NatB acetylates TPM1 protein and regulates tropomyocin-actin interactions, it is presumed to N-acetylate 15% of all yeast proteins. The polypeptide is N-terminal acetyltransferase B complex catalytic subunit NAT3 (Saccharomyces cerevisiae (strain ATCC 204508 / S288c) (Baker's yeast)).